Reading from the N-terminus, the 1332-residue chain is Elongator complex protein 1 (1332 aa).

Phosphoserine occurs at positions 471, 804, 867, 1171, and 1174. A mediates dimerization region spans residues 885-1332 (VDVNELYDHS…RTQWKLSLLD (448 aa)). The disordered stretch occupies residues 1150–1208 (QAGLDDEVPHGQESDLFSETSSVVSGSEMSGKYSHSNSRISARSSKNRRKAERKKHSLK). The segment covering 1164–1177 (DLFSETSSVVSGSE) has biased composition (polar residues). The interval 1191 to 1209 (ARSSKNRRKAERKKHSLKE) is required for binding to tRNA. Residues 1194-1206 (SKNRRKAERKKHS) show a composition bias toward basic residues.

It belongs to the ELP1/IKA1 family. In terms of assembly, homodimer; dimerization promotes ELP1 stability and elongator complex formation. Component of the elongator complex which consists of ELP1, ELP2, ELP3, ELP4, ELP5 and ELP6. Interacts preferentially with MAP3K14/NIK followed by IKK-alpha and IKK-beta.

The protein resides in the cytoplasm. Its subcellular location is the nucleus. Its pathway is tRNA modification; 5-methoxycarbonylmethyl-2-thiouridine-tRNA biosynthesis. Its function is as follows. Component of the elongator complex which is required for multiple tRNA modifications, including mcm5U (5-methoxycarbonylmethyl uridine), mcm5s2U (5-methoxycarbonylmethyl-2-thiouridine), and ncm5U (5-carbamoylmethyl uridine). The elongator complex catalyzes the formation of carboxymethyluridine in the wobble base at position 34 in tRNAs. Regulates the migration and branching of projection neurons in the developing cerebral cortex, through a process depending on alpha-tubulin acetylation. ELP1 binds to tRNA, mediating interaction of the elongator complex with tRNA. May act as a scaffold protein that assembles active IKK-MAP3K14 complexes (IKKA, IKKB and MAP3K14/NIK). In Homo sapiens (Human), this protein is Elongator complex protein 1.